A 146-amino-acid polypeptide reads, in one-letter code: Protein U1 (146 aa).

It belongs to the nanovirus U1 protein family.

This is Protein U1 (DNA-U1) from Subterranean clover stunt virus (strain F) (SCSV).